The chain runs to 79 residues: Acyl carrier protein (79 aa).

One can recognise a Carrier domain in the interval 2–77 (SDIEARVRKI…HAIDYIKSNA (76 aa)). S37 is modified (O-(pantetheine 4'-phosphoryl)serine).

This sequence belongs to the acyl carrier protein (ACP) family. In terms of processing, 4'-phosphopantetheine is transferred from CoA to a specific serine of apo-ACP by AcpS. This modification is essential for activity because fatty acids are bound in thioester linkage to the sulfhydryl of the prosthetic group.

The protein localises to the cytoplasm. It functions in the pathway lipid metabolism; fatty acid biosynthesis. In terms of biological role, carrier of the growing fatty acid chain in fatty acid biosynthesis. The sequence is that of Acyl carrier protein from Xylella fastidiosa (strain M23).